Consider the following 272-residue polypeptide: MNISKLPPLSPSVIRRILFYLLMLLFCQQLAMIFWRVGLPDNSPVASVQITPAQARQQPVTLNDFTLFGVSPEKNRSGALDASQMSNLPPSTLNLSLTGVMVGDDTARSIAIISKDNEQFSRGVNEEVPGYNAKIVSIRPDKVVLQYQGRYEVLGLYNQEENSADGVSGAQLNEQLQQRASTTMSDYVSFSPVMNDNKLHGYRLNPGPKSDSFYRVGLQDNDMAVALNGLDLRDEEQAKKAMERMADVHNFTLTVERDGQRQDIYMEFGGDE.

The Cytoplasmic segment spans residues 1 to 16 (MNISKLPPLSPSVIRR). Residues 17-35 (ILFYLLMLLFCQQLAMIFW) traverse the membrane as a helical segment. At 36–272 (RVGLPDNSPV…DIYMEFGGDE (237 aa)) the chain is on the periplasmic side.

The protein belongs to the GSP C family.

It localises to the cell inner membrane. Involved in a type II secretion system (T2SS, formerly general secretion pathway, GSP) for the export of proteins. Required for the translocation of the multiple pectic enzymes. The sequence is that of Type II secretion system protein C (outC) from Dickeya chrysanthemi (Pectobacterium chrysanthemi).